The chain runs to 224 residues: UPF0758 protein LCA_0852 (224 aa).

An MPN domain is found at 100–222 (VVASSQMVGQ…YLSLREEGYL (123 aa)). Residues H171, H173, and D184 each coordinate Zn(2+). The short motif at 171 to 184 (HNHPSGQLAPSTQD) is the JAMM motif element.

Belongs to the UPF0758 family.

The sequence is that of UPF0758 protein LCA_0852 from Latilactobacillus sakei subsp. sakei (strain 23K) (Lactobacillus sakei subsp. sakei).